A 283-amino-acid polypeptide reads, in one-letter code: Ribosomal RNA small subunit methyltransferase A (283 aa).

Residues N29, L31, G56, E77, D102, and N123 each coordinate S-adenosyl-L-methionine.

It belongs to the class I-like SAM-binding methyltransferase superfamily. rRNA adenine N(6)-methyltransferase family. RsmA subfamily.

Its subcellular location is the cytoplasm. The catalysed reaction is adenosine(1518)/adenosine(1519) in 16S rRNA + 4 S-adenosyl-L-methionine = N(6)-dimethyladenosine(1518)/N(6)-dimethyladenosine(1519) in 16S rRNA + 4 S-adenosyl-L-homocysteine + 4 H(+). Specifically dimethylates two adjacent adenosines (A1518 and A1519) in the loop of a conserved hairpin near the 3'-end of 16S rRNA in the 30S particle. May play a critical role in biogenesis of 30S subunits. The sequence is that of Ribosomal RNA small subunit methyltransferase A from Acidobacterium capsulatum (strain ATCC 51196 / DSM 11244 / BCRC 80197 / JCM 7670 / NBRC 15755 / NCIMB 13165 / 161).